We begin with the raw amino-acid sequence, 257 residues long: Indole-3-glycerol phosphate synthase (257 aa).

The protein belongs to the TrpC family.

The catalysed reaction is 1-(2-carboxyphenylamino)-1-deoxy-D-ribulose 5-phosphate + H(+) = (1S,2R)-1-C-(indol-3-yl)glycerol 3-phosphate + CO2 + H2O. It functions in the pathway amino-acid biosynthesis; L-tryptophan biosynthesis; L-tryptophan from chorismate: step 4/5. The polypeptide is Indole-3-glycerol phosphate synthase (Phenylobacterium zucineum (strain HLK1)).